The sequence spans 391 residues: Stearoyl-[acyl-carrier-protein] 9-desaturase 6, chloroplastic (391 aa).

Residues 1–38 (MLAHKSLLSFTTQWATLMPSPSTFLASRPRGPAKISAV) constitute a chloroplast transit peptide. Fe cation-binding residues include E130, E168, H171, E221, E254, and H257.

The protein belongs to the fatty acid desaturase type 2 family. In terms of assembly, homodimer. Fe(2+) serves as cofactor.

The protein localises to the plastid. Its subcellular location is the chloroplast. It carries out the reaction octadecanoyl-[ACP] + 2 reduced [2Fe-2S]-[ferredoxin] + O2 + 2 H(+) = (9Z)-octadecenoyl-[ACP] + 2 oxidized [2Fe-2S]-[ferredoxin] + 2 H2O. The protein operates within lipid metabolism; fatty acid metabolism. Converts stearoyl-ACP to oleoyl-ACP by introduction of a cis double bond between carbons 9 and 10 of the acyl chain. This Arabidopsis thaliana (Mouse-ear cress) protein is Stearoyl-[acyl-carrier-protein] 9-desaturase 6, chloroplastic (S-ACP-DES6).